Reading from the N-terminus, the 170-residue chain is Methanogen homoaconitase small subunit (170 aa).

The YLRT motif lies at 24-27; sequence YLRT.

This sequence belongs to the LeuD family. LeuD type 2 subfamily. As to quaternary structure, heterotetramer of 2 HacA and 2 HacB proteins. Cannot form a complex with LeuC.

The enzyme catalyses (2R)-homocitrate = (2R,3S)-homoisocitrate. It carries out the reaction (2R)-homocitrate = cis-homoaconitate + H2O. It catalyses the reaction (2R,3S)-homoisocitrate = cis-homoaconitate + H2O. The catalysed reaction is cis-(homo)2aconitate + H2O = (2R,3S)-iso(homo)2citrate. The enzyme catalyses cis-(homo)3aconitate + H2O = (2R,3S)-iso(homo)3citrate. It carries out the reaction (R)-malate = maleate + H2O. It catalyses the reaction cis-aconitate + H2O = D-threo-isocitrate. The protein operates within organic acid metabolism; 2-oxosuberate biosynthesis. Functionally, component of a hydro-lyase with broad substrate specificity for cis-unsaturated tricarboxylic acids. Catalyzes both the reversible dehydration of (R)-homocitrate ((R)-2-hydroxybutane-1,2,4-tricarboxylate) to produce cis-homoaconitate ((Z)-but-1-ene-1,2,4-tricarboxylate), and its hydration to homoisocitrate ((1R,2S)-1-hydroxybutane-1,2,4-tricarboxylate). Is also able to hydrate the analogous longer chain substrates cis-homo(2)-aconitate, cis-homo(3)-aconitate, and even the non-physiological cis-homo(4)-aconitate with similar efficiency. These reactions are part of the biosynthesis pathway of coenzyme B. Can also catalyze the hydration of maleate to (R)-malate, and that of cis-aconitate. Cannot catalyze the hydration of citraconate and the dehydration of (S)-homocitrate, citramalate, 2-isopropylmalate, 3-isopropylmalate, citrate or threo-DL-isocitrate. The protein is Methanogen homoaconitase small subunit (hacB) of Methanocaldococcus jannaschii (strain ATCC 43067 / DSM 2661 / JAL-1 / JCM 10045 / NBRC 100440) (Methanococcus jannaschii).